The following is a 237-amino-acid chain: Cysteine-rich venom protein tigrin (237 aa).

A signal peptide spans 1-18 (MIVFILLSLAAVLRQSFG). The SCP domain maps to 37-165 (VNIHNSFRRS…LYNYFYVCQY (129 aa)). 8 disulfides stabilise this stretch: C74-C152, C91-C166, C147-C163, C185-C192, C188-C197, C201-C232, C210-C226, and C217-C230. The region spanning 201–232 (CTHKDDYNNCNSLVSDCQSDWDKSHCPATCFC) is the ShKT domain.

This sequence belongs to the CRISP family. As to expression, expressed by the venom gland.

The protein resides in the secreted. In terms of biological role, this protein does not inhibit smooth muscle contraction elicited by high potassium levels or caffeine. The chain is Cysteine-rich venom protein tigrin from Rhabdophis tigrinus tigrinus (Tiger keelback snake).